We begin with the raw amino-acid sequence, 435 residues long: Putative magnesium transporter MRS2-H (435 aa).

The interval Phe19–Ser54 is disordered. 2 helical membrane-spanning segments follow: residues Leu369 to Ala389 and Phe408 to Trp428.

Belongs to the CorA metal ion transporter (MIT) (TC 1.A.35.5) family.

The protein resides in the membrane. Its function is as follows. Putative magnesium transporter. This chain is Putative magnesium transporter MRS2-H (MRS2-H), found in Oryza sativa subsp. indica (Rice).